We begin with the raw amino-acid sequence, 806 residues long: DEP domain-containing protein 1A (806 aa).

The DEP domain occupies 24–108 (FRAAMPLRKH…DNNSLYRFPS (85 aa)). The interval 142 to 177 (QFSKKTPKRRASVDSKEEQENEDLMEDQRNDDDFPK) is disordered. Residues 167-177 (EDQRNDDDFPK) show a composition bias toward basic and acidic residues. In terms of domain architecture, Rho-GAP spans 279–319 (DYFLNLPEPLLTFEFYELFVNILVVCGYITVPNSHNGKHRF). A disordered region spans residues 564–588 (SHSSFPSTSSLLPPTTSPNSTGSES).

In Xenopus laevis (African clawed frog), this protein is DEP domain-containing protein 1A (depdc1a).